We begin with the raw amino-acid sequence, 546 residues long: Protein RDR1 (546 aa).

Residues Cys-20–Cys-46 constitute a DNA-binding region (zn(2)-C6 fungal-type).

The protein resides in the nucleus. Functionally, transcriptional repressor of multidrug resistance genes, such as PDR5. Required for growth on non-fermentable carbon sources like lactate or glycerol. This is Protein RDR1 (RDR1) from Saccharomyces cerevisiae (strain ATCC 204508 / S288c) (Baker's yeast).